The following is a 226-amino-acid chain: ATP-dependent dethiobiotin synthetase BioD (226 aa).

12-17 (GIGKTV) lines the ATP pocket. T16 is a binding site for Mg(2+). Residue K37 is part of the active site. T41 is a substrate binding site. Residues D49, 108 to 111 (EGAG), and 197 to 199 (PAG) contribute to the ATP site. D49 and E108 together coordinate Mg(2+).

Belongs to the dethiobiotin synthetase family. As to quaternary structure, homodimer. Requires Mg(2+) as cofactor.

It localises to the cytoplasm. It carries out the reaction (7R,8S)-7,8-diammoniononanoate + CO2 + ATP = (4R,5S)-dethiobiotin + ADP + phosphate + 3 H(+). It participates in cofactor biosynthesis; biotin biosynthesis; biotin from 7,8-diaminononanoate: step 1/2. Functionally, catalyzes a mechanistically unusual reaction, the ATP-dependent insertion of CO2 between the N7 and N8 nitrogen atoms of 7,8-diaminopelargonic acid (DAPA, also called 7,8-diammoniononanoate) to form a ureido ring. This is ATP-dependent dethiobiotin synthetase BioD from Mycolicibacterium vanbaalenii (strain DSM 7251 / JCM 13017 / BCRC 16820 / KCTC 9966 / NRRL B-24157 / PYR-1) (Mycobacterium vanbaalenii).